Consider the following 454-residue polypeptide: Chromosomal replication initiator protein DnaA (454 aa).

Residues 1-76 (MNKLKTDLNL…IGASFRILAK (76 aa)) form a domain I, interacts with DnaA modulators region. A domain II region spans residues 76-113 (KNPKIIFAQESPGNGEKATGKKIKSLPREDKSSIFESK). Residues 114-330 (GLNTKFSFEN…GALNRLCAYA (217 aa)) form a domain III, AAA+ region region. ATP-binding residues include G158, G160, K161, and T162. The tract at residues 331–454 (SIHKEGKITL…KITEQLTSSQ (124 aa)) is domain IV, binds dsDNA.

The protein belongs to the DnaA family. As to quaternary structure, oligomerizes as a right-handed, spiral filament on DNA at oriC.

It localises to the cytoplasm. Its function is as follows. Plays an essential role in the initiation and regulation of chromosomal replication. ATP-DnaA binds to the origin of replication (oriC) to initiate formation of the DNA replication initiation complex once per cell cycle. Binds the DnaA box (a 9 base pair repeat at the origin) and separates the double-stranded (ds)DNA. Forms a right-handed helical filament on oriC DNA; dsDNA binds to the exterior of the filament while single-stranded (ss)DNA is stabiized in the filament's interior. The ATP-DnaA-oriC complex binds and stabilizes one strand of the AT-rich DNA unwinding element (DUE), permitting loading of DNA polymerase. After initiation quickly degrades to an ADP-DnaA complex that is not apt for DNA replication. Binds acidic phospholipids. This Methylacidiphilum infernorum (isolate V4) (Methylokorus infernorum (strain V4)) protein is Chromosomal replication initiator protein DnaA.